Here is a 250-residue protein sequence, read N- to C-terminus: 3-deoxy-manno-octulosonate cytidylyltransferase (250 aa).

This sequence belongs to the KdsB family.

The protein resides in the cytoplasm. It carries out the reaction 3-deoxy-alpha-D-manno-oct-2-ulosonate + CTP = CMP-3-deoxy-beta-D-manno-octulosonate + diphosphate. It participates in nucleotide-sugar biosynthesis; CMP-3-deoxy-D-manno-octulosonate biosynthesis; CMP-3-deoxy-D-manno-octulosonate from 3-deoxy-D-manno-octulosonate and CTP: step 1/1. The protein operates within bacterial outer membrane biogenesis; lipopolysaccharide biosynthesis. Its function is as follows. Activates KDO (a required 8-carbon sugar) for incorporation into bacterial lipopolysaccharide in Gram-negative bacteria. This Herminiimonas arsenicoxydans protein is 3-deoxy-manno-octulosonate cytidylyltransferase.